The chain runs to 189 residues: Endoribonuclease YbeY (189 aa).

Over residues 1–10 (MKERSSSPGT) the composition is skewed to polar residues. Residues 1 to 23 (MKERSSSPGTPDSGRRARPKPAK) form a disordered region. Residues His-141, His-145, and His-151 each contribute to the Zn(2+) site.

The protein belongs to the endoribonuclease YbeY family. Requires Zn(2+) as cofactor.

It is found in the cytoplasm. Functionally, single strand-specific metallo-endoribonuclease involved in late-stage 70S ribosome quality control and in maturation of the 3' terminus of the 16S rRNA. This is Endoribonuclease YbeY from Nitrosospira multiformis (strain ATCC 25196 / NCIMB 11849 / C 71).